Here is a 309-residue protein sequence, read N- to C-terminus: Foldase protein PrsA 2 (309 aa).

Positions 1–22 (MKQMNKLITGVVTLATVVTLSA) are cleaved as a signal peptide. Cys-23 carries N-palmitoyl cysteine lipidation. Residue Cys-23 is the site of S-diacylglycerol cysteine attachment. The PpiC domain occupies 146 to 241 (TPTMTAEIMQ…RTYHIIKVTK (96 aa)).

It belongs to the PrsA family.

It localises to the cell membrane. The catalysed reaction is [protein]-peptidylproline (omega=180) = [protein]-peptidylproline (omega=0). Functionally, plays a major role in protein secretion by helping the post-translocational extracellular folding of several secreted proteins. The chain is Foldase protein PrsA 2 from Streptococcus pyogenes serotype M6 (strain ATCC BAA-946 / MGAS10394).